A 419-amino-acid polypeptide reads, in one-letter code: POU domain, class 4, transcription factor 1 (419 aa).

A POU-IV box motif is present at residues 57–66; it reads RAEALAAVDI. Disordered regions lie at residues 94-117 and 131-197; these read STVP…GDLL and AGGA…HSLG. The span at 99–108 shows a compositional bias: basic residues; the sequence is AHHHHHHHHH. Positions 131-184 are enriched in gly residues; the sequence is AGGAGAAAGGGGAHDGPGGGGGPGGGGGPGGGPGGGGGGGPGGGGGGPGGGLLG. Positions 261-338 constitute a POU-specific domain; that stretch reads SDTDPRELEA…LQAWLEEAEG (78 aa). Positions 356-415 form a DNA-binding region, homeobox; sequence KRKRTSIAAPEKRSLEAYFAVQPRPSSEKIAAIAEKLDLKKNVVRVWFCNQRQKQKRMKF.

It belongs to the POU transcription factor family. Class-4 subfamily. In terms of assembly, interacts (via N-terminus) with RIT2; the interaction controls POU4F1 transactivation activity on some neuronal target genes. Isoform 1 interacts with POU4F2; this interaction inhibits both POU4F1 DNA-binding and transcriptional activities. Isoform 1 interacts (C-terminus) with ESR1 (via DNA-binding domain); this interaction decreases the estrogen receptor ESR1 transcriptional activity in a DNA- and ligand 17-beta-estradiol-independent manner. In terms of tissue distribution, expressed in the brain and the retina. Present in the developing brain, spinal cord and eye.

The protein resides in the nucleus. It localises to the cytoplasm. Functionally, multifunctional transcription factor with different regions mediating its different effects. Acts by binding (via its C-terminal domain) to sequences related to the consensus octamer motif 5'-ATGCAAAT-3' in the regulatory regions of its target genes. Regulates the expression of specific genes involved in differentiation and survival within a subset of neuronal lineages. It has been shown that activation of some of these genes requires its N-terminal domain, maybe through a neuronal-specific cofactor. Activates BCL2 expression and protects neuronal cells from apoptosis (via the N-terminal domain). Induces neuronal process outgrowth and the coordinate expression of genes encoding synaptic proteins. Exerts its major developmental effects in somatosensory neurons and in brainstem nuclei involved in motor control. Stimulates the binding affinity of the nuclear estrogene receptor ESR1 to DNA estrogen response element (ERE), and hence modulates ESR1-induced transcriptional activity. May positively regulate POU4F2 and POU4F3. Regulates dorsal root ganglion sensory neuron specification and axonal projection into the spinal cord. Plays a role in TNFSF11-mediated terminal osteoclast differentiation. Negatively regulates its own expression interacting directly with a highly conserved autoregulatory domain surrounding the transcription initiation site. Its function is as follows. Able to act as transcription factor, cannot regulate the expression of the same subset of genes than isoform 1. Does not have antiapoptotic effect on neuronal cells. The protein is POU domain, class 4, transcription factor 1 of Homo sapiens (Human).